Reading from the N-terminus, the 339-residue chain is Probable cytosolic iron-sulfur protein assembly protein CIAO1 (339 aa).

WD repeat units follow at residues 14–53, 59–98, 103–142, 148–187, 192–231, 250–289, and 301–339; these read HPDS…WICK, GHQR…FECV, GHEN…EYEC, SHTQ…WVCC, GHES…NEQG, FHSR…DPQQ, and AHSQ…PEGL. The LYR motif; required for interaction with HSC20 signature appears at 176–178; it reads LYR.

It belongs to the WD repeat CIA1 family. In terms of assembly, component of the CIA complex. Interacts with CIAO2A and forms a complex with CIAO2B and MMS19; the interactions with CIAO2A and CIAO2B are mutually exclusive. Interacts with CHD1L, ERCC2, IREB2 and POLD1. Component of the MMXD complex, which includes CIAO1, ERCC2, CIAO2B, MMS19 and SLC25A5. Interacts with WT1. Interacts with CIAO3. Interacts (via LYR motif) with HSC20.

It is found in the cytoplasm. In terms of biological role, key component of the cytosolic iron-sulfur protein assembly (CIA) complex, a multiprotein complex that mediates the incorporation of iron-sulfur cluster into extramitochondrial Fe/S proteins. As a CIA complex component, interacts specifically with CIAO2A or CIAO2B and MMS19 to assist different branches of iron-sulfur protein assembly, depending of its interactors. The complex CIAO1:CIAO2B:MMS19 binds to and facilitates the assembly of most cytosolic-nuclear Fe/S proteins. CIAO1:CIAO2A specifically matures ACO1 and stabilizes IREB2. Seems to specifically modulate the transactivation activity of WT1. As part of the mitotic spindle-associated MMXD complex it may play a role in chromosome segregation. This is Probable cytosolic iron-sulfur protein assembly protein CIAO1 from Homo sapiens (Human).